The following is a 431-amino-acid chain: Venom metalloproteinase 1 (431 aa).

The signal sequence occupies residues 1–22 (MDLFILTRFILFLSFFMKSIHC). Residues asparagine 64, asparagine 113, asparagine 148, and asparagine 187 are each glycosylated (N-linked (GlcNAc...) asparagine). The Peptidase M12B domain maps to 228 to 428 (DLLMKTSRRL…TSAACLKDTY (201 aa)). 2 cysteine pairs are disulfide-bonded: cysteine 340-cysteine 423 and cysteine 379-cysteine 407. Histidine 363 provides a ligand contact to Zn(2+). Glutamate 364 is a catalytic residue. Residues histidine 367 and histidine 373 each contribute to the Zn(2+) site. The N-linked (GlcNAc...) asparagine glycan is linked to asparagine 414.

It in the C-terminal section; belongs to the venom metalloproteinase (M12B) family. In terms of assembly, monomer. The cofactor is Zn(2+). Expressed by the venom gland.

The protein localises to the secreted. The gelatinase activity is inhibited by EDTA. Its function is as follows. The recombinant protein has gelatinase activity. In vivo, injection of this recombinant into fifth instar L.oleracea (host) larvae results in partial insect mortality associated with the molt to sixth instar, with surviving insects showing retarded development and growth. This chain is Venom metalloproteinase 1, found in Eulophus pennicornis (Parasitoid wasp).